A 297-amino-acid polypeptide reads, in one-letter code: Acetyl-coenzyme A carboxylase carboxyl transferase subunit beta (297 aa).

The tract at residues 1 to 23 is disordered; it reads MSWIERILGRTSSSSSSSKSKVP. In terms of domain architecture, CoA carboxyltransferase N-terminal spans 26 to 295; the sequence is VWTKCTSCEQ…PFKTAELIVE (270 aa). Residues Cys-30, Cys-33, Cys-49, and Cys-52 each coordinate Zn(2+). A C4-type zinc finger spans residues 30 to 52; the sequence is CTSCEQVLYSEELKRNMHVCPKC.

Belongs to the AccD/PCCB family. As to quaternary structure, acetyl-CoA carboxylase is a heterohexamer composed of biotin carboxyl carrier protein (AccB), biotin carboxylase (AccC) and two subunits each of ACCase subunit alpha (AccA) and ACCase subunit beta (AccD). Requires Zn(2+) as cofactor.

Its subcellular location is the cytoplasm. The catalysed reaction is N(6)-carboxybiotinyl-L-lysyl-[protein] + acetyl-CoA = N(6)-biotinyl-L-lysyl-[protein] + malonyl-CoA. The protein operates within lipid metabolism; malonyl-CoA biosynthesis; malonyl-CoA from acetyl-CoA: step 1/1. In terms of biological role, component of the acetyl coenzyme A carboxylase (ACC) complex. Biotin carboxylase (BC) catalyzes the carboxylation of biotin on its carrier protein (BCCP) and then the CO(2) group is transferred by the transcarboxylase to acetyl-CoA to form malonyl-CoA. The protein is Acetyl-coenzyme A carboxylase carboxyl transferase subunit beta of Actinobacillus pleuropneumoniae serotype 7 (strain AP76).